Reading from the N-terminus, the 116-residue chain is SPbeta prophage-derived uncharacterized protein YomQ (116 aa).

The polypeptide is SPbeta prophage-derived uncharacterized protein YomQ (yomQ) (Bacillus subtilis (strain 168)).